A 124-amino-acid chain; its full sequence is uncharacterized protein (124 aa).

Interacts with dil1.

This is an uncharacterized protein from Schizosaccharomyces pombe (strain 972 / ATCC 24843) (Fission yeast).